The chain runs to 155 residues: Ferredoxin-6, chloroplastic (155 aa).

The transit peptide at 1 to 58 directs the protein to the chloroplast; sequence MSTATAPRLPAPRSGASYHYQTTAAPAANTLSFAGHARQAARASGPRLSSRFVASAAA. Residues 61–152 form the 2Fe-2S ferredoxin-type domain; the sequence is HKVKLVGPDG…DCVIHTHKEE (92 aa). Residues Cys-98, Cys-103, Cys-106, and Cys-136 each coordinate [2Fe-2S] cluster.

This sequence belongs to the 2Fe2S plant-type ferredoxin family. It depends on [2Fe-2S] cluster as a cofactor.

The protein localises to the plastid. Its subcellular location is the chloroplast. Its function is as follows. Ferredoxins are iron-sulfur proteins that transfer electrons in a wide variety of metabolic reactions. This Zea mays (Maize) protein is Ferredoxin-6, chloroplastic (FDX6).